The primary structure comprises 294 residues: MFQGVYTAVITPFRQGKIDYDSYFKILENQIRSGVAGVVPCGTTGESPTLSYEEHKELIQKTVQVVSGKIQVIAGTGSNSTKEAIELTESACADGVDGILSVNPYYNKPTQEGMFQHFTAIANVSSKPVMLYNIPGRTNVNLLPETVSRLAAHPKIAAIKEATGDLGQMAKVISQCPTNFDLLSGDDNLTLPVLSIGGKGVVSVVSNLFPRACVDMVSLYLRGDLEASKKIYYKLLPVFVNAFIETNPIPIKAAMSWFGYCSNELRLPMTSLSEGTASESFKKIVFQLKEEGIV.

Threonine 44 contacts pyruvate. Catalysis depends on tyrosine 132, which acts as the Proton donor/acceptor. Residue lysine 160 is the Schiff-base intermediate with substrate of the active site. Pyruvate is bound at residue valine 202.

Belongs to the DapA family. In terms of assembly, homotetramer; dimer of dimers.

Its subcellular location is the cytoplasm. It carries out the reaction L-aspartate 4-semialdehyde + pyruvate = (2S,4S)-4-hydroxy-2,3,4,5-tetrahydrodipicolinate + H2O + H(+). The protein operates within amino-acid biosynthesis; L-lysine biosynthesis via DAP pathway; (S)-tetrahydrodipicolinate from L-aspartate: step 3/4. In terms of biological role, catalyzes the condensation of (S)-aspartate-beta-semialdehyde [(S)-ASA] and pyruvate to 4-hydroxy-tetrahydrodipicolinate (HTPA). The polypeptide is 4-hydroxy-tetrahydrodipicolinate synthase (Leptospira biflexa serovar Patoc (strain Patoc 1 / Ames)).